A 168-amino-acid polypeptide reads, in one-letter code: Nicotinamide-nucleotide adenylyltransferase (168 aa).

This sequence belongs to the archaeal NMN adenylyltransferase family.

The protein localises to the cytoplasm. It carries out the reaction beta-nicotinamide D-ribonucleotide + ATP + H(+) = diphosphate + NAD(+). Its pathway is cofactor biosynthesis; NAD(+) biosynthesis; NAD(+) from nicotinamide D-ribonucleotide: step 1/1. In Methanoculleus marisnigri (strain ATCC 35101 / DSM 1498 / JR1), this protein is Nicotinamide-nucleotide adenylyltransferase.